We begin with the raw amino-acid sequence, 165 residues long: NADH-quinone oxidoreductase subunit I (165 aa).

2 4Fe-4S ferredoxin-type domains span residues 57–86 (RRYE…IESD) and 96–125 (SRYD…ETHI). Positions 66, 69, 72, 76, 105, 108, 111, and 115 each coordinate [4Fe-4S] cluster.

Belongs to the complex I 23 kDa subunit family. As to quaternary structure, NDH-1 is composed of 14 different subunits. Subunits NuoA, H, J, K, L, M, N constitute the membrane sector of the complex. [4Fe-4S] cluster is required as a cofactor.

It is found in the cell inner membrane. It catalyses the reaction a quinone + NADH + 5 H(+)(in) = a quinol + NAD(+) + 4 H(+)(out). Functionally, NDH-1 shuttles electrons from NADH, via FMN and iron-sulfur (Fe-S) centers, to quinones in the respiratory chain. The immediate electron acceptor for the enzyme in this species is believed to be ubiquinone. Couples the redox reaction to proton translocation (for every two electrons transferred, four hydrogen ions are translocated across the cytoplasmic membrane), and thus conserves the redox energy in a proton gradient. In Polaromonas naphthalenivorans (strain CJ2), this protein is NADH-quinone oxidoreductase subunit I.